The following is a 746-amino-acid chain: Protein C-mannosyl-transferase DPY19L1 (746 aa).

A disordered region spans residues 1 to 68 (MVLQARSKHR…RAGTAAPAPD (68 aa)). Serine 28 and serine 31 each carry phosphoserine. The span at 59–68 (RAGTAAPAPD) shows a compositional bias: low complexity. 11 helical membrane-spanning segments follow: residues 137-159 (LYYS…WMIM), 227-247 (ACFY…LFFI), 257-279 (LGGV…VMWT), 307-325 (LCRG…FMLP), 331-350 (FVLL…GYID), 357-374 (IIYM…LMFG), 380-396 (TSYY…MLAM), 405-425 (VSEL…TVIL), 481-501 (LLLP…FNDM), 520-540 (GELV…VLIM), and 562-582 (LFGW…ILAA).

The protein belongs to the dpy-19 family.

Its subcellular location is the endoplasmic reticulum membrane. It catalyses the reaction L-tryptophyl-[protein] + a di-trans,poly-cis-dolichyl beta-D-mannosyl phosphate = C-alpha-D-mannosyl-L-tryptophyl-[protein] + a di-trans,poly-cis-dolichyl phosphate + H(+). It functions in the pathway protein modification; protein glycosylation. Functionally, C-mannosyltransferase that mediates the C-mannosylation tryptophan residues on target proteins. The reaction occurs on the luminal side of the endoplasmic reticulum and involves the transfer of a mannose unit from a dolichylphosphate mannose (Dol-P-Man) donor to an acceptor protein containing a WxxW consensus sequence. C-mannosylates the first two tryptophans in the WxxWxxWxxC sequence motif in thrombospondin (TSP) type-1 repeats of UNC5A. Regulates neurite extension during development. This is Protein C-mannosyl-transferase DPY19L1 (Dpy19l1) from Mus musculus (Mouse).